A 183-amino-acid chain; its full sequence is Probable apo-citrate lyase phosphoribosyl-dephospho-CoA transferase (183 aa).

This sequence belongs to the CitX family.

It catalyses the reaction apo-[citrate lyase ACP] + 2'-(5''-triphospho-alpha-D-ribosyl)-3'-dephospho-CoA = holo-[citrate lyase ACP] + diphosphate. Its function is as follows. Transfers 2-(5''-triphosphoribosyl)-3'-dephosphocoenzyme-A on a serine residue to the apo-acyl carrier protein (gamma chain) of the citrate lyase to yield holo-acyl carrier protein. The polypeptide is Probable apo-citrate lyase phosphoribosyl-dephospho-CoA transferase (Escherichia coli (strain 55989 / EAEC)).